The chain runs to 291 residues: 33 kDa chaperonin (291 aa).

Cystine bridges form between Cys-237–Cys-239 and Cys-270–Cys-273.

The protein belongs to the HSP33 family. Post-translationally, under oxidizing conditions two disulfide bonds are formed involving the reactive cysteines. Under reducing conditions zinc is bound to the reactive cysteines and the protein is inactive.

It is found in the cytoplasm. Redox regulated molecular chaperone. Protects both thermally unfolding and oxidatively damaged proteins from irreversible aggregation. Plays an important role in the bacterial defense system toward oxidative stress. The polypeptide is 33 kDa chaperonin (Bacillus cereus (strain B4264)).